Consider the following 334-residue polypeptide: MGSIGSMGKPIEGFLVAAIQFPVPIVNSRKDIDHNIESIIRTLHATKAGYPGVELIIFPEYSTQGLNTAKWLSEEFLLDVPGKETELYAKACKEAKVYGVFSIMERNPDSNKNPYNTAIIIDPQGEIILKYRKLFPWNPIEPWYPGDLGMPVCEGPGGSKLAVCICHDGMIPELAREAAYKGCNVYIRISGYSTQVNDQWILTNRSNAWHNLMYTVSVNLAGYDNVFYYFGEGQICNFDGTTLVQGHRNPWEIVTGEIYPKMADNARLSWGLENNIYNLGHRGYVAKPGGEHDAGLTYIKDLAAGKYKLPWEDHMKIKDGSIYGYPTTGGRFGK.

Positions 14-260 (FLVAAIQFPV…WEIVTGEIYP (247 aa)) constitute a CN hydrolase domain. Residue glutamate 60 is the Proton acceptor of the active site. Catalysis depends on lysine 133, which acts as the Proton donor. Cysteine 166 functions as the Nucleophile in the catalytic mechanism.

The protein belongs to the carbon-nitrogen hydrolase superfamily. Aliphatic amidase family. Homotetramer.

The catalysed reaction is formamide + H2O = formate + NH4(+). Inhibited by iodoacetate. Appears to be regulated by the fur protein, but this effect is not mediated at the transcriptional level. In terms of biological role, is an aliphatic amidase with a restricted substrate specificity, as it only hydrolyzes formamide. Probably involved in the nitrogen metabolism of H.pylori. This is Formamidase (amiF) from Helicobacter pylori (strain ATCC 700392 / 26695) (Campylobacter pylori).